Consider the following 328-residue polypeptide: Tetraacyldisaccharide 4'-kinase (328 aa).

59–66 (TAGGNGKT) provides a ligand contact to ATP.

It belongs to the LpxK family.

The catalysed reaction is a lipid A disaccharide + ATP = a lipid IVA + ADP + H(+). It participates in glycolipid biosynthesis; lipid IV(A) biosynthesis; lipid IV(A) from (3R)-3-hydroxytetradecanoyl-[acyl-carrier-protein] and UDP-N-acetyl-alpha-D-glucosamine: step 6/6. Functionally, transfers the gamma-phosphate of ATP to the 4'-position of a tetraacyldisaccharide 1-phosphate intermediate (termed DS-1-P) to form tetraacyldisaccharide 1,4'-bis-phosphate (lipid IVA). In Aliivibrio fischeri (strain MJ11) (Vibrio fischeri), this protein is Tetraacyldisaccharide 4'-kinase.